The sequence spans 240 residues: Uridylate kinase (240 aa).

ATP is bound at residue 12–15 (KLSG). The involved in allosteric activation by GTP stretch occupies residues 20 to 25 (GSQGFG). Position 54 (G54) interacts with UMP. 2 residues coordinate ATP: G55 and R59. UMP is bound by residues D74 and 135-142 (TGNPYFST). 2 residues coordinate ATP: Y168 and D171.

The protein belongs to the UMP kinase family. As to quaternary structure, homohexamer.

It localises to the cytoplasm. It carries out the reaction UMP + ATP = UDP + ADP. The protein operates within pyrimidine metabolism; CTP biosynthesis via de novo pathway; UDP from UMP (UMPK route): step 1/1. Its activity is regulated as follows. Allosterically activated by GTP. Inhibited by UTP. Its function is as follows. Catalyzes the reversible phosphorylation of UMP to UDP. This chain is Uridylate kinase, found in Desulfitobacterium hafniense (strain Y51).